Reading from the N-terminus, the 464-residue chain is Hydrogen cyanide synthase subunit HcnB (464 aa).

Heterotrimer of HcnA, HcnB and HcnC.

The protein resides in the cell membrane. It carries out the reaction glycine + 2 A = hydrogen cyanide + 2 AH2 + CO2. With respect to regulation, oxygen is necessary for cyanogenesis. Activated by succinate, glycine methyl ester, glucose and D,L-methionine in addition to glycine. Phenazine methosulfate, methylene blue, 2,6-dichlorophenolindophenol (DCIP) and ferricyanide can replace oxygen for the reaction. Inhibited by pyrrolnitrin and acriflavine at 1 mM concentration. A three-component membrane-bound flavoenzyme that catalyzes the formation of hydrogen cyanide, a secondary metabolite, by transfer of electrons to a cyanide-resistant branch of the aerobic respiratory chain. This is Hydrogen cyanide synthase subunit HcnB from Pseudomonas aeruginosa (strain ATCC 15692 / DSM 22644 / CIP 104116 / JCM 14847 / LMG 12228 / 1C / PRS 101 / PAO1).